A 323-amino-acid chain; its full sequence is Mas-related G-protein coupled receptor member B4 (323 aa).

Residues 1–34 (MSPTTQAWSINNTVVKENYYTEILSCITTFNTLN) are Extracellular-facing. N-linked (GlcNAc...) asparagine glycosylation occurs at N11. A helical transmembrane segment spans residues 35 to 55 (FLIVIISVVGMAGNATVLWLL). Over 56–63 (GFHMHRNA) the chain is Cytoplasmic. A helical membrane pass occupies residues 64–84 (FSVYVLNLAGADFLYLCAQTV). Residues 85-98 (YSLECVLQFDNSYF) are Extracellular-facing. The chain crosses the membrane as a helical span at residues 99-119 (YFLLTILMFNYLAGFCMIAAI). Residues 120–147 (STERCLSVTWPIWYHCQRPRHTSATVCA) lie on the Cytoplasmic side of the membrane. Residues 148–168 (LFWAFSLLLSLLLGQGCGFLF) form a helical membrane-spanning segment. The Extracellular segment spans residues 169-180 (SKFDYSFCRYCN). A helical transmembrane segment spans residues 181 to 201 (FIATAFLIVIFMVLFVSSLAL). Over 202–224 (LAKIICGSHRIPVTRFYVTIALT) the chain is Cytoplasmic. The helical transmembrane segment at 225-245 (VLVFIFFGLPIGICVFLLPWI) threads the bilayer. At 246–255 (HMMLSSFFYE) the chain is on the extracellular side. The helical transmembrane segment at 256–276 (MVTLLSCVNSCANPIIYFFVG) threads the bilayer. Residues 277–323 (SIRHHRLQRQTLKLLLQRAMQDTPEEEGGERGPSQKSEDLEVVRCSS) are Cytoplasmic-facing. Positions 298-323 (DTPEEEGGERGPSQKSEDLEVVRCSS) are disordered. Basic and acidic residues predominate over residues 312–323 (KSEDLEVVRCSS).

The protein belongs to the G-protein coupled receptor 1 family. Mas subfamily. As to expression, expressed strongly in newborn dorsal root ganglia, adult dorsal root ganglia and trigeminal ganlia.

It localises to the membrane. Its function is as follows. Orphan receptor. Probably involved in the function of nociceptive neurons. May regulate nociceptor function and/or development, including the sensation or modulation of pain. This chain is Mas-related G-protein coupled receptor member B4 (Mrgprb4), found in Rattus norvegicus (Rat).